A 938-amino-acid polypeptide reads, in one-letter code: Histone deacetylase 7 (938 aa).

A disordered region spans residues 1–40; the sequence is MHSPGAGCPALQPDTPGSQPQPMDLRVGQRPTVEPPPEPA. Positions 1 to 121 are interaction with MEF2C; sequence MHSPGAGCPA…LAEVILKKQQ (121 aa). Transcription repression stretches follow at residues 2-254 and 241-533; these read HSPG…DGDR and GPNP…EHAG. Residues 72–172 form an interaction with MEF2A region; sequence SMDPPMPELQ…LPTEPPEHFP (101 aa). Serine 132 bears the Phosphoserine mark. Disordered regions lie at residues 155-280, 331-361, 373-463, and 472-491; these read SFLP…HHGL, SGSG…APLQ, LIKP…DSVL, and RPLS…LSPE. The residue at position 178 (serine 178) is a Phosphoserine; by MARK2, MARK3 and PKD/PRKD1. The segment covering 190–204 has biased composition (basic and acidic residues); the sequence is KSLERRKNPLLRKES. Phosphoserine; by PKD/PRKD2 is present on serine 204. Low complexity predominate over residues 220 to 235; sequence SSPSSSSTPASGCSSP. Serine 344 is modified (phosphoserine; by PKD/PRKD1). Residues serine 350 and serine 398 each carry the phosphoserine modification. A compositionally biased stretch (low complexity) spans 350–361; the sequence is SATASPLLAPLQ. Low complexity-rich tracts occupy residues 429-448 and 479-491; these read GRGS…EQQH and SSPA…LSPE. Position 479 is a phosphoserine; by PKD/PRKD1 (serine 479). Residue serine 480 is modified to Phosphoserine. Residues 505–852 form a histone deacetylase region; it reads PATGLVYDSV…VAALLGNKVD (348 aa). Positions 520, 522, and 528 each coordinate Zn(2+). Serine 582 carries the phosphoserine modification. Zn(2+) is bound at residue cysteine 605. Histidine 657 is an active-site residue. The interval 864–938 is interaction with SIN3A; that stretch reads NLSAIRSLEA…LVEEEEPMNL (75 aa). The Nuclear export signal signature appears at 904–938; that stretch reads AEVEAVTALASLSVGILAEDRPSERLVEEEEPMNL.

The protein belongs to the histone deacetylase family. HD type 2 subfamily. In terms of assembly, interacts with HDAC1, HDAC2, HDAC3, HDAC4, HDAC5, NCOR1, NCOR2, SIN3A, SIN3B, RBBP4, RBBP7, MTA1L1, SAP30 and MBD3. Interacts with KAT5 and EDNRA. Interacts with the 14-3-3 protein YWHAE, MEF2A, MEF2B and MEF2C. Interacts with ZMYND15. Interacts with KDM5B. Interacts with PML. Interacts with FOXP3. Interacts with RARA. Post-translationally, may be phosphorylated by CaMK1. Phosphorylated by the PKC kinases PKN1 and PKN2, impairing nuclear import. Phosphorylation at Ser-178 by MARK2, MARK3 and PRKD1 promotes interaction with 14-3-3 proteins and export from the nucleus. Phosphorylation at Ser-178 is a prerequisite for phosphorylation at Ser-204. Highly expressed in heart and lung. Expressed at intermediate level in muscle.

It localises to the nucleus. It is found in the cytoplasm. The enzyme catalyses N(6)-acetyl-L-lysyl-[histone] + H2O = L-lysyl-[histone] + acetate. It catalyses the reaction N(6)-acetyl-L-lysyl-[protein] + H2O = L-lysyl-[protein] + acetate. With respect to regulation, its activity is inhibited by Trichostatin A (TSA), a known histone deacetylase inhibitor. Its function is as follows. Responsible for the deacetylation of lysine residues on the N-terminal part of the core histones (H2A, H2B, H3 and H4). Histone deacetylation gives a tag for epigenetic repression and plays an important role in transcriptional regulation, cell cycle progression and developmental events. Histone deacetylases act via the formation of large multiprotein complexes. Involved in muscle maturation by repressing transcription of myocyte enhancer factors such as MEF2A, MEF2B and MEF2C. During muscle differentiation, it shuttles into the cytoplasm, allowing the expression of myocyte enhancer factors. Positively regulates the transcriptional repressor activity of FOXP3. Serves as a corepressor of RARA, causing its deacetylation and inhibition of RARE DNA element binding. In association with RARA, plays a role in the repression of microRNA-10a and thereby in the inflammatory response. Also acetylates non-histone proteins, such as ALKBH5. In Mus musculus (Mouse), this protein is Histone deacetylase 7 (Hdac7).